Here is a 1484-residue protein sequence, read N- to C-terminus: Chromatin remodeling regulator CECR2 (1484 aa).

The segment at 170–241 (VQGKSNGELS…RHGSQGPGQG (72 aa)) is disordered. A compositionally biased stretch (basic residues) spans 197–209 (TGKRRGRPPKRKK). A compositionally biased stretch (basic and acidic residues) spans 210 to 222 (LQEEILLSEKQEE). Residues 223-234 (NSLASEPQTRHG) are compositionally biased toward polar residues. Serine 422 bears the Phosphoserine mark. The Bromo domain maps to 434–538 (FELDDDFTAM…RCFHRAMMKH (105 aa)). Threonine 546 carries the phosphothreonine modification. Disordered regions lie at residues 556–704 (EKRE…GPRL), 796–825 (GNHGATNQGPLGPDEKPHLGPGPSHQPRTL), 919–1053 (GVPY…SYPG), 1165–1259 (VMGG…LFSD), 1287–1320 (AKVPNDGQNPGPEEEKLDESMERPESPKEFLDLD), and 1442–1484 (YRPS…LDQS). Position 571 is a phosphoserine (serine 571). Residues 605–614 (SSGDDQSSSS) show a composition bias toward low complexity. At serine 1014 the chain carries Phosphoserine. Residues arginine 1197 and arginine 1203 each carry the asymmetric dimethylarginine modification. The span at 1243 to 1254 (SGPPASQPPPPR) shows a compositional bias: pro residues. Residues 1304-1320 (DESMERPESPKEFLDLD) are compositionally biased toward basic and acidic residues. A Phosphoserine modification is found at serine 1312. Residues 1451 to 1469 (PVQSQASFPKTPTAATSQE) are compositionally biased toward polar residues. The span at 1474–1484 (HKPPTLPLDQS) shows a compositional bias: pro residues.

In terms of assembly, component of the CERF-1 ISWI chromatin remodeling complex (also called the CECR2-containing remodeling factor (CERF) complex) at least composed of CECR2 and SMARCA1. Component of the CERF-5 ISWI chromatin remodeling complex at least composed of SMARCA5/SNF2H and CECR2. LUZP1 is detected as part of the CERF-1 and CERF-5 complexes in embryonic stem (ES) cells where it is involved in complex stabilization but is not detected in the complexes in the testis. Interacts with CCAR2; CCAR2 may form part of the CERF-1 and/or CEF-5 ISWI chromatin remodeling complexes in ES cells. Interacts with acetylated lysine residues on histone H2A and H3 (in vitro). Interacts with LRPPRC. As to expression, highly expressed in skeletal muscle, thymus, placenta and lung. Expressed at lower level in brain, heart, colon, spleen, kidney.

Its subcellular location is the nucleus. In terms of biological role, regulatory subunit of the ATP-dependent CERF-1 and CERF-5 ISWI chromatin remodeling complexes, which form ordered nucleosome arrays on chromatin and facilitate access to DNA during DNA-templated processes such as DNA replication, transcription, and repair. The complexes do not have the ability to slide mononucleosomes to the center of a DNA template. The CERF-1 ISWI chromatin remodeling complex has a lower ATP hydrolysis rate than the CERF-5 ISWI chromatin remodeling complex. Plays a role in various processes during development: required during embryogenesis for neural tube closure and inner ear development. In adults, required for spermatogenesis, via the formation of ISWI-type chromatin complexes. In histone-modifying complexes, CECR2 recognizes and binds acylated histones: binds histones that are acetylated and/or butyrylated. May also be involved through its interaction with LRPPRC in the integration of cytoskeletal network with vesicular trafficking, nucleocytosolic shuttling, transcription, chromosome remodeling and cytokinesis. In Homo sapiens (Human), this protein is Chromatin remodeling regulator CECR2 (CECR2).